The sequence spans 61 residues: Probable tautomerase LMOf2365_2536 (61 aa).

Pro2 serves as the catalytic Proton acceptor; via imino nitrogen.

This sequence belongs to the 4-oxalocrotonate tautomerase family.

The sequence is that of Probable tautomerase LMOf2365_2536 from Listeria monocytogenes serotype 4b (strain F2365).